The primary structure comprises 315 residues: 4-hydroxy-3-methylbut-2-enyl diphosphate reductase (315 aa).

Cysteine 12 serves as a coordination point for [4Fe-4S] cluster. (2E)-4-hydroxy-3-methylbut-2-enyl diphosphate is bound by residues histidine 41 and histidine 74. Dimethylallyl diphosphate-binding residues include histidine 41 and histidine 74. Histidine 41 and histidine 74 together coordinate isopentenyl diphosphate. Cysteine 96 lines the [4Fe-4S] cluster pocket. Residue histidine 124 participates in (2E)-4-hydroxy-3-methylbut-2-enyl diphosphate binding. Histidine 124 contacts dimethylallyl diphosphate. Residue histidine 124 participates in isopentenyl diphosphate binding. Glutamate 126 serves as the catalytic Proton donor. Residue threonine 168 coordinates (2E)-4-hydroxy-3-methylbut-2-enyl diphosphate. [4Fe-4S] cluster is bound at residue cysteine 198. 4 residues coordinate (2E)-4-hydroxy-3-methylbut-2-enyl diphosphate: serine 226, serine 227, asparagine 228, and serine 270. Serine 226, serine 227, asparagine 228, and serine 270 together coordinate dimethylallyl diphosphate. Isopentenyl diphosphate is bound by residues serine 226, serine 227, asparagine 228, and serine 270.

The protein belongs to the IspH family. The cofactor is [4Fe-4S] cluster.

The catalysed reaction is isopentenyl diphosphate + 2 oxidized [2Fe-2S]-[ferredoxin] + H2O = (2E)-4-hydroxy-3-methylbut-2-enyl diphosphate + 2 reduced [2Fe-2S]-[ferredoxin] + 2 H(+). The enzyme catalyses dimethylallyl diphosphate + 2 oxidized [2Fe-2S]-[ferredoxin] + H2O = (2E)-4-hydroxy-3-methylbut-2-enyl diphosphate + 2 reduced [2Fe-2S]-[ferredoxin] + 2 H(+). It participates in isoprenoid biosynthesis; dimethylallyl diphosphate biosynthesis; dimethylallyl diphosphate from (2E)-4-hydroxy-3-methylbutenyl diphosphate: step 1/1. Its pathway is isoprenoid biosynthesis; isopentenyl diphosphate biosynthesis via DXP pathway; isopentenyl diphosphate from 1-deoxy-D-xylulose 5-phosphate: step 6/6. Catalyzes the conversion of 1-hydroxy-2-methyl-2-(E)-butenyl 4-diphosphate (HMBPP) into a mixture of isopentenyl diphosphate (IPP) and dimethylallyl diphosphate (DMAPP). Acts in the terminal step of the DOXP/MEP pathway for isoprenoid precursor biosynthesis. In Pseudomonas fluorescens (strain SBW25), this protein is 4-hydroxy-3-methylbut-2-enyl diphosphate reductase.